The chain runs to 247 residues: V-type proton ATPase subunit D (247 aa).

Belongs to the V-ATPase D subunit family. V-ATPase is a heteromultimeric enzyme made up of two complexes: the ATP-hydrolytic V1 complex and the proton translocation V0 complex. The V1 complex consists of three catalytic AB heterodimers that form a heterohexamer, three peripheral stalks each consisting of EG heterodimers, one central rotor including subunits D and F, and the regulatory subunits C and H. The proton translocation complex V0 consists of the proton transport subunit a, a ring of proteolipid subunits c9c'', rotary subunit d, subunits e and f, and the accessory subunits ATP6AP1/Ac45 and ATP6AP2/PRR. Interacts with SNX10.

The protein localises to the membrane. Its subcellular location is the cytoplasmic vesicle. It localises to the clathrin-coated vesicle membrane. The protein resides in the cytoplasm. It is found in the cytoskeleton. The protein localises to the microtubule organizing center. Its subcellular location is the centrosome. It localises to the cell projection. The protein resides in the cilium. Its function is as follows. Subunit of the V1 complex of vacuolar(H+)-ATPase (V-ATPase), a multisubunit enzyme composed of a peripheral complex (V1) that hydrolyzes ATP and a membrane integral complex (V0) that translocates protons. V-ATPase is responsible for acidifying and maintaining the pH of intracellular compartments and in some cell types, is targeted to the plasma membrane, where it is responsible for acidifying the extracellular environment. May play a role in cilium biogenesis through regulation of the transport and the localization of proteins to the cilium. The protein is V-type proton ATPase subunit D (ATP6V1D) of Homo sapiens (Human).